Consider the following 687-residue polypeptide: Translation initiation factor IF-2 (687 aa).

In terms of domain architecture, tr-type G spans lysine 186–lysine 355. The tract at residues glycine 195–threonine 202 is G1. A GTP-binding site is contributed by glycine 195–threonine 202. Residues glycine 220–histidine 224 are G2. Positions aspartate 241–glycine 244 are G3. GTP contacts are provided by residues aspartate 241–histidine 245 and asparagine 295–aspartate 298. Residues asparagine 295–aspartate 298 form a G4 region. The tract at residues serine 331–lysine 333 is G5.

This sequence belongs to the TRAFAC class translation factor GTPase superfamily. Classic translation factor GTPase family. IF-2 subfamily.

Its subcellular location is the cytoplasm. Functionally, one of the essential components for the initiation of protein synthesis. Protects formylmethionyl-tRNA from spontaneous hydrolysis and promotes its binding to the 30S ribosomal subunits. Also involved in the hydrolysis of GTP during the formation of the 70S ribosomal complex. The protein is Translation initiation factor IF-2 of Clostridium botulinum (strain Eklund 17B / Type B).